Consider the following 209-residue polypeptide: Heat shock protein beta-1 (209 aa).

The residue at position 12 (Arg12) is an Omega-N-methylarginine. Ser13 carries the post-translational modification Phosphoserine. Ser15 is modified (phosphoserine; by MAPKAPK2 and MAPKAPK3). Ser27 is modified (phosphoserine). Residues 74–209 (APAYSRALSR…AGKSEQSGAK (136 aa)) are interaction with TGFB1I1. Positions 80–188 (ALSRQLSSGV…QSAEITIPVT (109 aa)) constitute a sHSP domain. Phosphoserine; by MAPKAPK2, MAPKAPK3 and MAPKAPK5 is present on residues Ser82 and Ser86. Phosphoserine is present on residues Ser87, Ser90, and Ser102. Lys127 is subject to N6-acetyllysine. At Thr178 the chain carries Phosphothreonine. Phosphoserine is present on residues Ser180 and Ser203.

This sequence belongs to the small heat shock protein (HSP20) family. In terms of assembly, homooligomer. Homodimer; becomes monomeric upon activation. Heterooligomer; with HSPB6. Associates with alpha- and beta-tubulin. Interacts with TGFB1I1. Interacts with CRYAB. Interacts with HSPB8. Interacts with HSPBAP1. Phosphorylated upon exposure to protein kinase C activators and heat shock. Phosphorylation by MAPKAPK2 and MAPKAPK3 in response to stress dissociates HSPB1 from large small heat-shock protein (sHsps) oligomers and impairs its chaperone activity and ability to protect against oxidative stress effectively. Phosphorylation by MAPKAPK5 in response to PKA stimulation induces F-actin rearrangement.

The protein resides in the cytoplasm. It is found in the nucleus. Its subcellular location is the cytoskeleton. It localises to the spindle. Small heat shock protein which functions as a molecular chaperone probably maintaining denatured proteins in a folding-competent state. Plays a role in stress resistance and actin organization. Through its molecular chaperone activity may regulate numerous biological processes including the phosphorylation and the axonal transport of neurofilament proteins. This is Heat shock protein beta-1 (HSPB1) from Canis lupus familiaris (Dog).